The primary structure comprises 313 residues: Antiviral protein I (313 aa).

The signal sequence occupies residues 1-22 (MKSMLVVTISIWLILAPTSTWA). 2 disulfides stabilise this stretch: C56–C281 and C107–C128. Y94 is a catalytic residue. V95 provides a ligand contact to substrate. S143 contributes to the substrate binding site. Y145 is a catalytic residue. S197 contributes to the substrate binding site. Catalysis depends on residues E198 and R201. A substrate-binding site is contributed by R201. Positions 286–313 (NQNAMFPQLIMSTYYNYMVNLGDLFEGF) are excised as a propeptide.

Belongs to the ribosome-inactivating protein family. Type 1 RIP subfamily. Monomer. As to expression, expressed in spring leaves (at protein level). Expressed in roots (at protein level).

It catalyses the reaction Endohydrolysis of the N-glycosidic bond at one specific adenosine on the 28S rRNA.. Possesses antiviral potency. Inhibits viral infection of plants (tobacco mosaic virus). Inhibits protein synthesis. Releases both adenine and guanine from Escherichia coli rRNA in vitro. Activity on guanine is 20 times slower than that on adenine. The chain is Antiviral protein I (PAP1) from Phytolacca americana (American pokeweed).